Consider the following 467-residue polypeptide: Transcriptional modulator WTM2 (467 aa).

The span at 1-12 (MAKSKSSQGASG) shows a compositional bias: low complexity. 2 disordered regions span residues 1–22 (MAKS…PSLY) and 84–121 (TFYD…AFQD). Residues 87 to 100 (DDDDDDDNDDDDEE) are compositionally biased toward acidic residues. WD repeat units lie at residues 244-282 (PGTN…KPLW), 287-327 (PKNG…LATT), and 349-389 (SGGD…SRND).

Its function is as follows. Transcriptional modulator with roles in meiotic regulation and silencing. In Saccharomyces cerevisiae (strain ATCC 204508 / S288c) (Baker's yeast), this protein is Transcriptional modulator WTM2 (WTM2).